A 286-amino-acid chain; its full sequence is Shikimate dehydrogenase (NADP(+)) (286 aa).

Residues 19–21 (SLS) and T66 contribute to the shikimate site. K70 acts as the Proton acceptor in catalysis. Shikimate is bound by residues N91 and D107. NADP(+) contacts are provided by residues 129 to 133 (GSGGA) and L229. Residue Y231 participates in shikimate binding. Residue G252 coordinates NADP(+).

This sequence belongs to the shikimate dehydrogenase family. As to quaternary structure, homodimer.

It carries out the reaction shikimate + NADP(+) = 3-dehydroshikimate + NADPH + H(+). It participates in metabolic intermediate biosynthesis; chorismate biosynthesis; chorismate from D-erythrose 4-phosphate and phosphoenolpyruvate: step 4/7. Functionally, involved in the biosynthesis of the chorismate, which leads to the biosynthesis of aromatic amino acids. Catalyzes the reversible NADPH linked reduction of 3-dehydroshikimate (DHSA) to yield shikimate (SA). The chain is Shikimate dehydrogenase (NADP(+)) from Prochlorococcus marinus (strain MIT 9215).